The chain runs to 449 residues: Hyaluronidase-1 (449 aa).

Residues 1-39 (MKPFSPEVSPDPCPATAAHLLRTYTLFLTLLELAQGCRG) form the signal peptide. 2 cysteine pairs are disulfide-bonded: C58-C348 and C222-C236. N-linked (GlcNAc...) asparagine glycosylation is found at N85 and N114. The active-site Proton donor is E146. N-linked (GlcNAc...) asparagine glycosylation is found at N231, N252, and N365. 3 disulfide bridges follow: C373–C384, C378–C433, and C435–C444. Positions 433–444 (CRCYRGWSGEWC) constitute an EGF-like domain.

The protein belongs to the glycosyl hydrolase 56 family.

Its subcellular location is the secreted. The protein localises to the lysosome. It carries out the reaction Random hydrolysis of (1-&gt;4)-linkages between N-acetyl-beta-D-glucosamine and D-glucuronate residues in hyaluronate.. In terms of biological role, may have a role in promoting tumor progression. May block the TGFB1-enhanced cell growth. Overexpression of HYAL1 suppressed the growth rate of colon carcinoma cell tumors in an experimental model. In Rattus norvegicus (Rat), this protein is Hyaluronidase-1 (Hyal1).